A 265-amino-acid polypeptide reads, in one-letter code: 3-methyl-2-oxobutanoate hydroxymethyltransferase (265 aa).

2 residues coordinate Mg(2+): Asp-43 and Asp-82. 3-methyl-2-oxobutanoate-binding positions include Asp-43–Ser-44, Asp-82, and Lys-111. Glu-113 provides a ligand contact to Mg(2+). Glu-180 (proton acceptor) is an active-site residue.

The protein belongs to the PanB family. In terms of assembly, homodecamer; pentamer of dimers. The cofactor is Mg(2+).

The protein localises to the cytoplasm. It catalyses the reaction 3-methyl-2-oxobutanoate + (6R)-5,10-methylene-5,6,7,8-tetrahydrofolate + H2O = 2-dehydropantoate + (6S)-5,6,7,8-tetrahydrofolate. Its pathway is cofactor biosynthesis; (R)-pantothenate biosynthesis; (R)-pantoate from 3-methyl-2-oxobutanoate: step 1/2. In terms of biological role, catalyzes the reversible reaction in which hydroxymethyl group from 5,10-methylenetetrahydrofolate is transferred onto alpha-ketoisovalerate to form ketopantoate. This Francisella tularensis subsp. novicida (strain U112) protein is 3-methyl-2-oxobutanoate hydroxymethyltransferase.